Here is a 195-residue protein sequence, read N- to C-terminus: Probable GTP-binding protein EngB (195 aa).

The EngB-type G domain occupies 22-195 (GLPEIALAGR…WNAILAKINK (174 aa)). GTP-binding positions include 30-37 (GRSNVGKS), 57-61 (GKTQT), 75-78 (DVPG), 142-145 (TKAD), and 174-176 (FSS). 2 residues coordinate Mg(2+): Ser37 and Thr59.

It belongs to the TRAFAC class TrmE-Era-EngA-EngB-Septin-like GTPase superfamily. EngB GTPase family. The cofactor is Mg(2+).

Functionally, necessary for normal cell division and for the maintenance of normal septation. This is Probable GTP-binding protein EngB from Bacillus pumilus (strain SAFR-032).